A 144-amino-acid polypeptide reads, in one-letter code: UPF0547 protein C16orf87 homolog (144 aa).

Residues 33–112 (HAKQSQRLPP…EEKEKQEKEV (80 aa)) form a disordered region. Over residues 35 to 45 (KQSQRLPPTSE) the composition is skewed to polar residues. A compositionally biased stretch (basic residues) spans 50-62 (PKRRRTERIKRER). Basic and acidic residues-rich tracts occupy residues 63–74 (IHTAVNRDLENR) and 99–112 (KKHE…EKEV). The stretch at 94-122 (KTATTKKHEEEKEKQEKEVDMYANLSDEK) forms a coiled coil.

The protein belongs to the UPF0547 family.

The chain is UPF0547 protein C16orf87 homolog from Xenopus laevis (African clawed frog).